The sequence spans 498 residues: Osteoclast stimulatory transmembrane protein (498 aa).

The Cytoplasmic portion of the chain corresponds to 1-51; that stretch reads MRTIRAATEHLFGLGWKFWRLGICKAVVPLQAAWKAFSQPVPASCNELLTQ. The helical transmembrane segment at 52-72 threads the bilayer; the sequence is LLLCVSLASLIAGLAHHWLVS. Residues 73–81 lie on the Extracellular side of the membrane; that stretch reads LQLYPLGPP. A helical membrane pass occupies residues 82–102; the sequence is ALVTSLCGLFVFLSLGLVPPI. The Cytoplasmic portion of the chain corresponds to 103 to 121; the sequence is RCLFVLSVPTLGSKQGRRL. A helical membrane pass occupies residues 122–142; that stretch reads LLSYSAANLAVAVVPNVLGNV. Topologically, residues 143–226 are extracellular; the sequence is RAAGQVLSCV…LARAALGTQR (84 aa). Residues 227 to 247 form a helical membrane-spanning segment; the sequence is VVTGLFLLGLLGESAWYLHRY. Over 248–303 the chain is Cytoplasmic; sequence LTDLRFDNIYATRQLVRQLAQAGATHLLTSPPPWLLQTAQPKLSREELLSCLLRLG. Residues 304–324 form a helical membrane-spanning segment; that stretch reads LLALLLVATAVTVASDYGAFL. Topologically, residues 325 to 401 are extracellular; it reads LAQAAVAWAQ…QAQPPRVTAA (77 aa). The chain crosses the membrane as a helical span at residues 402–422; the sequence is LAAGALQLLAGATLVLQAYAW. At 423-498 the chain is on the cytoplasmic side; it reads RLRHTIAASF…DSLGPPYDLE (76 aa). Residues 449-498 form a disordered region; that stretch reads QRRHNQSDHLNKQPGTMATRESRKPGQGTRTLESQGPQAHDSLGPPYDLE. A compositionally biased stretch (polar residues) spans 476–485; that stretch reads GTRTLESQGP.

As to expression, expressed in osteoclast (at protein level). Ubiquitous. Highly expressed in multi-nuclear osteoclast cells compared to mono-nuclear macrophages. Expressed in foreign body giant cells (FBGCs).

It localises to the membrane. In terms of biological role, probable cell surface receptor that plays a role in cellular fusion and cell differentiation. Cooperates with DCSTAMP in modulating cell-cell fusion in both osteoclasts and foreign body giant cells (FBGCs). Involved in osteoclast bone resorption. Promotes osteoclast differentiation and may play a role in the multinucleated osteoclast maturation. This is Osteoclast stimulatory transmembrane protein (Ocstamp) from Mus musculus (Mouse).